The primary structure comprises 382 residues: Galactokinase (382 aa).

34-37 is a binding site for substrate; sequence EHTD. 124–130 is a binding site for ATP; sequence GAGLSSS. 2 residues coordinate Mg(2+): Ser130 and Glu162. The active-site Proton acceptor is Asp174. Tyr223 provides a ligand contact to substrate.

Belongs to the GHMP kinase family. GalK subfamily.

The protein localises to the cytoplasm. The enzyme catalyses alpha-D-galactose + ATP = alpha-D-galactose 1-phosphate + ADP + H(+). It functions in the pathway carbohydrate metabolism; galactose metabolism. Functionally, catalyzes the transfer of the gamma-phosphate of ATP to D-galactose to form alpha-D-galactose-1-phosphate (Gal-1-P). In Escherichia coli O81 (strain ED1a), this protein is Galactokinase.